The following is a 24-amino-acid chain: Cupiennin-5a (24 aa).

In terms of tissue distribution, expressed by the venom gland.

It is found in the secreted. This chain is Cupiennin-5a, found in Cupiennius salei (American wandering spider).